The sequence spans 74 residues: MEIKYLLTVFLVLLIVSDHCQAFLFSLIPHAISGLISAFKGRRKRDLDGQIDRFRNFRKRDAELEELLSKLPIY.

The N-terminal stretch at 1-22 (MEIKYLLTVFLVLLIVSDHCQA) is a signal peptide. The residue at position 40 (lysine 40) is a Lysine amide. Positions 46–74 (DLDGQIDRFRNFRKRDAELEELLSKLPIY) are excised as a propeptide.

The protein belongs to the non-disulfide-bridged peptide (NDBP) superfamily. Short antimicrobial peptide (group 4) family. In terms of tissue distribution, expressed by the venom gland.

It localises to the secreted. It is found in the target cell membrane. Functionally, has antimicrobial activity against the Gram-positive bacteria S.aureus (MIC=8 uM) and the yeast C.albicans (MIC=16 uM). Causes hemolysis on horse erythrocytes (64 uM for 100% hemolysis). Minimum bactericidal concentrations have also been tested against S.aureus and is four-fold higher (MBC=32 uM). The chain is Antimicrobial peptide AcrAP1 from Androctonus crassicauda (Arabian fat-tailed scorpion).